The chain runs to 190 residues: Xanthine phosphoribosyltransferase 2 (190 aa).

The xanthine site is built by Leu20 and Asn27. A 5-phospho-alpha-D-ribose 1-diphosphate-binding site is contributed by 129–133 (ANGCA). Lys157 provides a ligand contact to xanthine.

This sequence belongs to the purine/pyrimidine phosphoribosyltransferase family. Xpt subfamily. Homodimer.

Its subcellular location is the cytoplasm. The catalysed reaction is XMP + diphosphate = xanthine + 5-phospho-alpha-D-ribose 1-diphosphate. It functions in the pathway purine metabolism; XMP biosynthesis via salvage pathway; XMP from xanthine: step 1/1. In terms of biological role, converts the preformed base xanthine, a product of nucleic acid breakdown, to xanthosine 5'-monophosphate (XMP), so it can be reused for RNA or DNA synthesis. This Clostridium botulinum (strain Langeland / NCTC 10281 / Type F) protein is Xanthine phosphoribosyltransferase 2.